The following is a 44-amino-acid chain: Defensin-like protein 1 (44 aa).

The residue at position 1 (Gln1) is a Pyrrolidone carboxylic acid. Cys15 and Cys36 are disulfide-bonded.

It belongs to the DEFL family. Forms oligomers in its native state.

It localises to the secreted. Its function is as follows. Possesses antifungal activity sensitive to inorganic cations. The polypeptide is Defensin-like protein 1 (AFP1) (Brassica napus (Rape)).